A 288-amino-acid polypeptide reads, in one-letter code: ATP synthase gamma chain (288 aa).

The protein belongs to the ATPase gamma chain family. F-type ATPases have 2 components, CF(1) - the catalytic core - and CF(0) - the membrane proton channel. CF(1) has five subunits: alpha(3), beta(3), gamma(1), delta(1), epsilon(1). CF(0) has three main subunits: a, b and c.

It is found in the cell inner membrane. Its function is as follows. Produces ATP from ADP in the presence of a proton gradient across the membrane. The gamma chain is believed to be important in regulating ATPase activity and the flow of protons through the CF(0) complex. The sequence is that of ATP synthase gamma chain from Legionella pneumophila (strain Paris).